The sequence spans 89 residues: Small ribosomal subunit protein uS15 (89 aa).

It belongs to the universal ribosomal protein uS15 family. Part of the 30S ribosomal subunit. Forms a bridge to the 50S subunit in the 70S ribosome, contacting the 23S rRNA.

One of the primary rRNA binding proteins, it binds directly to 16S rRNA where it helps nucleate assembly of the platform of the 30S subunit by binding and bridging several RNA helices of the 16S rRNA. Its function is as follows. Forms an intersubunit bridge (bridge B4) with the 23S rRNA of the 50S subunit in the ribosome. In Oenococcus oeni (strain ATCC BAA-331 / PSU-1), this protein is Small ribosomal subunit protein uS15.